A 229-amino-acid chain; its full sequence is Large ribosomal subunit protein uL1 (229 aa).

The protein belongs to the universal ribosomal protein uL1 family. In terms of assembly, part of the 50S ribosomal subunit.

In terms of biological role, binds directly to 23S rRNA. The L1 stalk is quite mobile in the ribosome, and is involved in E site tRNA release. Its function is as follows. Protein L1 is also a translational repressor protein, it controls the translation of the L11 operon by binding to its mRNA. The chain is Large ribosomal subunit protein uL1 from Clostridium botulinum (strain 657 / Type Ba4).